We begin with the raw amino-acid sequence, 202 residues long: Urease accessory protein UreE (202 aa).

Positions 138–202 (RGAYHSHGGH…HGHHHGHKHD (65 aa)) are disordered. Residues 147-193 (HSHDHGHAAHDHGHAAHDHGHNHDHDHGHAHGHDHQHDHNCDHDHDH) show a composition bias toward basic and acidic residues.

This sequence belongs to the UreE family.

The protein localises to the cytoplasm. Involved in urease metallocenter assembly. Binds nickel. Probably functions as a nickel donor during metallocenter assembly. This Rhizobium etli (strain CIAT 652) protein is Urease accessory protein UreE.